The sequence spans 219 residues: Small ribosomal subunit protein uS3 (219 aa).

Residues 38–106 (IREYIENRLK…RVHINIFEVK (69 aa)) enclose the KH type-2 domain.

Belongs to the universal ribosomal protein uS3 family. As to quaternary structure, part of the 30S ribosomal subunit. Forms a tight complex with proteins S10 and S14.

In terms of biological role, binds the lower part of the 30S subunit head. Binds mRNA in the 70S ribosome, positioning it for translation. The protein is Small ribosomal subunit protein uS3 of Halalkalibacterium halodurans (strain ATCC BAA-125 / DSM 18197 / FERM 7344 / JCM 9153 / C-125) (Bacillus halodurans).